The sequence spans 50 residues: DNA replication protein repEA (50 aa).

Involved in T4 DNA replication. Binds to ssDNA. The sequence is that of DNA replication protein repEA (repEA) from Enterobacteria phage T4 (Bacteriophage T4).